Here is a 162-residue protein sequence, read N- to C-terminus: Crossover junction endodeoxyribonuclease RuvC (162 aa).

Catalysis depends on residues Asp8, Glu69, and His141. Mg(2+) is bound by residues Asp8, Glu69, and His141.

Belongs to the RuvC family. In terms of assembly, homodimer which binds Holliday junction (HJ) DNA. The HJ becomes 2-fold symmetrical on binding to RuvC with unstacked arms; it has a different conformation from HJ DNA in complex with RuvA. In the full resolvosome a probable DNA-RuvA(4)-RuvB(12)-RuvC(2) complex forms which resolves the HJ. It depends on Mg(2+) as a cofactor.

Its subcellular location is the cytoplasm. The enzyme catalyses Endonucleolytic cleavage at a junction such as a reciprocal single-stranded crossover between two homologous DNA duplexes (Holliday junction).. The RuvA-RuvB-RuvC complex processes Holliday junction (HJ) DNA during genetic recombination and DNA repair. Endonuclease that resolves HJ intermediates. Cleaves cruciform DNA by making single-stranded nicks across the HJ at symmetrical positions within the homologous arms, yielding a 5'-phosphate and a 3'-hydroxyl group; requires a central core of homology in the junction. The consensus cleavage sequence is 5'-(A/T)TT(C/G)-3'. Cleavage occurs on the 3'-side of the TT dinucleotide at the point of strand exchange. HJ branch migration catalyzed by RuvA-RuvB allows RuvC to scan DNA until it finds its consensus sequence, where it cleaves and resolves the cruciform DNA. This Wolbachia sp. subsp. Brugia malayi (strain TRS) protein is Crossover junction endodeoxyribonuclease RuvC.